Reading from the N-terminus, the 556-residue chain is MVLADLGSRLRGALSSVESGSDDEIQQMIKDICSALLESDVNVKLVAKLRGNIKNKIDESNVSKETSAMNKRKKLQKIIFDELCALVDSNVEPPKPKKLSTSTKTINGKKVRLSKESSHVIMFVGLQGAGKTTSCTKLAVYYKKRGFKVGLVCADTFRAGAFDQLKQNAIKANIPYYGSYLEPDPVKIAFEGVQKFKQEKFDIIIVDTSGRHRQEEQLFTEMVQIGEAVQPTQTIMVMDGSIGQAAESQARAFKESSNFGSIILTKMDGHAKGGGAISAVAATKTPIVFIGTGEHVGDLEIFKPTTFISKLLGIGDIQGLIEHVQSLNLHQDEGHKQTIEHIKEGKFTLRDFQNQMNNFLKMGPLTNIASMIPGLSNIMSQVGDEETSKKIKNMIYIMDSMTTKELECDGRIFIKEPSRIVRVARGSGCAVVEVEMILQQHRMMSTMAKSAMAAQGGQPGQPGNPMANNPQMQRMMQQAQSNPNFMQQAMNMLGGAGGGAGGAGGLAGMMNNPAMMQQAQQMMRSNPQMMQQAQQMMKNPGMMQKMMQQFGGMGGM.

A G-domain region spans residues 1–312 (MVLADLGSRL…KPTTFISKLL (312 aa)). Residues 125–132 (GLQGAGKT), 207–211 (DTSGR), and 265–268 (TKMD) each bind GTP. The M-domain stretch occupies residues 313–556 (GIGDIQGLIE…MQQFGGMGGM (244 aa)). Residues 450–470 (SAMAAQGGQPGQPGNPMANNP) are disordered.

It belongs to the GTP-binding SRP family. SRP54 subfamily. In terms of assembly, fungal signal recognition particle (SRP) complex consists of a 7S RNA molecule (scR1) and at least six protein subunits: SRP72, SRP68, SRP54, SEC65, SRP21 and SRP14. Interacts with SRP101.

Its subcellular location is the cytoplasm. The protein resides in the endoplasmic reticulum. It catalyses the reaction GTP + H2O = GDP + phosphate + H(+). Functionally, signal-recognition-particle (SRP) assembly has a crucial role in targeting secretory proteins to the rough endoplasmic reticulum (ER) membrane. SRP is required for the cotranslational protein translocation for ER import and preferentially recognizes strongly hydrophobic signal sequences. It is involved in targeting the nascent chain-ribosome (RNC) complex to the ER and is proposed to participate in the arrest of nascent chain elongation during membrane targeting. SRP54 binds to the signal sequence of presecretory protein when they emerge from the ribosomes. SRP54 interacts with the scR1 RNA and mediates the association of the resulting SRP-RNC complex with the signal recognition particle receptor (SR) via its alpha subunit SRP101. Both, SRP54 and SRP101, are locked in their GTP bound forms in the SRP-RNC-SR complex, which dissociates upon transferring the signal sequence to the protein-conducting channel (translocon). After signal sequence transfer, SRP54 and SRP101 act as reciprocal GTPase-activating proteins (GAPs), thereby resolving their association. This chain is Signal recognition particle subunit SRP54 (SRP54), found in Candida albicans (Yeast).